Here is a 60-residue protein sequence, read N- to C-terminus: Large ribosomal subunit protein uL30 (60 aa).

The protein belongs to the universal ribosomal protein uL30 family. As to quaternary structure, part of the 50S ribosomal subunit.

The sequence is that of Large ribosomal subunit protein uL30 from Lysinibacillus sphaericus (strain C3-41).